Here is a 78-residue protein sequence, read N- to C-terminus: NAD(P)H-quinone oxidoreductase subunit O (78 aa).

Belongs to the complex I NdhO subunit family. In terms of assembly, NDH-1 can be composed of about 15 different subunits; different subcomplexes with different compositions have been identified which probably have different functions.

It is found in the cellular thylakoid membrane. The catalysed reaction is a plastoquinone + NADH + (n+1) H(+)(in) = a plastoquinol + NAD(+) + n H(+)(out). It carries out the reaction a plastoquinone + NADPH + (n+1) H(+)(in) = a plastoquinol + NADP(+) + n H(+)(out). Its function is as follows. NDH-1 shuttles electrons from an unknown electron donor, via FMN and iron-sulfur (Fe-S) centers, to quinones in the respiratory and/or the photosynthetic chain. The immediate electron acceptor for the enzyme in this species is believed to be plastoquinone. Couples the redox reaction to proton translocation, and thus conserves the redox energy in a proton gradient. Cyanobacterial NDH-1 also plays a role in inorganic carbon-concentration. In Prochlorococcus marinus (strain MIT 9215), this protein is NAD(P)H-quinone oxidoreductase subunit O.